Consider the following 478-residue polypeptide: DNA-directed RNA polymerase subunit alpha (478 aa).

Residues 1–341 are alpha N-terminal domain (alpha-NTD); the sequence is MNKKIQDFFL…LDCMRLLNYE (341 aa). Residues 365 to 478 are alpha C-terminal domain (alpha-CTD); it reads RFYNSREDKT…KLGSRNEKNL (114 aa).

The protein belongs to the RNA polymerase alpha chain family. As to quaternary structure, in plastids the minimal PEP RNA polymerase catalytic core is composed of four subunits: alpha, beta, beta', and beta''. When a (nuclear-encoded) sigma factor is associated with the core the holoenzyme is formed, which can initiate transcription.

It is found in the plastid. Its subcellular location is the chloroplast. It catalyses the reaction RNA(n) + a ribonucleoside 5'-triphosphate = RNA(n+1) + diphosphate. Its function is as follows. DNA-dependent RNA polymerase catalyzes the transcription of DNA into RNA using the four ribonucleoside triphosphates as substrates. This is DNA-directed RNA polymerase subunit alpha (rpoA) from Tetradesmus obliquus (Green alga).